We begin with the raw amino-acid sequence, 413 residues long: Transcription factor bHLH23 (413 aa).

The segment at 40–75 is disordered; the sequence is SSQTQTPSCDPPLILRGSGSGDGEGNGPLPQPPPPL. The residue at position 186 (Thr-186) is a Phosphothreonine. Residue Ser-191 is modified to Phosphoserine. Disordered regions lie at residues 232 to 278 and 391 to 413; these read TEPV…RSRA and ETEQETMSLLLREDKRTKQKMFS. Positions 246–257 are enriched in basic and acidic residues; the sequence is TDERKRKTREET. The bHLH domain occupies 277–326; the sequence is RAAIMHKLSERRRRQKINEMMKALQELLPRCTKTDRSSMLDDVIEYVKSL.

As to quaternary structure, homodimer. As to expression, expressed constitutively in leaves, stems, and flowers.

The protein resides in the nucleus. The chain is Transcription factor bHLH23 (BHLH23) from Arabidopsis thaliana (Mouse-ear cress).